A 633-amino-acid polypeptide reads, in one-letter code: Threonine--tRNA ligase (633 aa).

The region spanning 1-59 is the TGS domain; the sequence is MIKVTFLAEQKVKEYSGRVTGFDILQPDALREAIAFKVNGELYDLSREIESDTEIEVIQ. A catalytic region spans residues 240–532; it reads DHRKIAKDMD…LIENYAGKFP (293 aa). Positions 332, 383, and 509 each coordinate Zn(2+).

It belongs to the class-II aminoacyl-tRNA synthetase family. As to quaternary structure, homodimer. Zn(2+) serves as cofactor.

It is found in the cytoplasm. It carries out the reaction tRNA(Thr) + L-threonine + ATP = L-threonyl-tRNA(Thr) + AMP + diphosphate + H(+). Catalyzes the attachment of threonine to tRNA(Thr) in a two-step reaction: L-threonine is first activated by ATP to form Thr-AMP and then transferred to the acceptor end of tRNA(Thr). Also edits incorrectly charged L-seryl-tRNA(Thr). In Wolbachia pipientis subsp. Culex pipiens (strain wPip), this protein is Threonine--tRNA ligase.